A 554-amino-acid chain; its full sequence is Glucose-6-phosphate isomerase (554 aa).

At serine 2 the chain carries N-acetylserine. Position 53 is a phosphothreonine (threonine 53). Residues 168–169 (GS), 218–223 (SKTFTT), glutamine 363, glutamate 367, histidine 398, and lysine 520 each bind D-glucose 6-phosphate. Threonine 220 carries the post-translational modification Phosphothreonine. The active-site Proton donor is the glutamate 367. Catalysis depends on residues histidine 398 and lysine 520.

This sequence belongs to the GPI family. In terms of assembly, homodimer.

The protein resides in the cytoplasm. It is found in the cytosol. It carries out the reaction alpha-D-glucose 6-phosphate = beta-D-fructose 6-phosphate. Its pathway is carbohydrate degradation; glycolysis; D-glyceraldehyde 3-phosphate and glycerone phosphate from D-glucose: step 2/4. Strongly inhibited by the polyol (sugar alcohol) phosphate D-glucitol 6-phosphate (D-sorbitol 6-phosphate). Also inhibited by the polyol (sugar alcohol) phosphate D-ribitol 5-phosphate. In the cytoplasm, catalyzes the conversion of glucose-6-phosphate to fructose-6-phosphate, the second step in glycolysis, and the reverse reaction during gluconeogenesis. The chain is Glucose-6-phosphate isomerase (PGI1) from Saccharomyces cerevisiae (strain ATCC 204508 / S288c) (Baker's yeast).